A 622-amino-acid polypeptide reads, in one-letter code: Phosphomethylpyrimidine synthase (622 aa).

Residues 109 to 130 form a disordered region; the sequence is EPISNNNNDRQSSDKQLSFTTN. Substrate is bound by residues Asn234, Met263, Tyr292, His328, 348 to 350, 389 to 392, and Glu428; these read SRG and DGLR. His432 provides a ligand contact to Zn(2+). Tyr455 serves as a coordination point for substrate. Residue His496 coordinates Zn(2+). [4Fe-4S] cluster is bound by residues Cys576, Cys579, and Cys584.

It belongs to the ThiC family. As to quaternary structure, homodimer. [4Fe-4S] cluster is required as a cofactor.

The catalysed reaction is 5-amino-1-(5-phospho-beta-D-ribosyl)imidazole + S-adenosyl-L-methionine = 4-amino-2-methyl-5-(phosphooxymethyl)pyrimidine + CO + 5'-deoxyadenosine + formate + L-methionine + 3 H(+). It participates in cofactor biosynthesis; thiamine diphosphate biosynthesis. Catalyzes the synthesis of the hydroxymethylpyrimidine phosphate (HMP-P) moiety of thiamine from aminoimidazole ribotide (AIR) in a radical S-adenosyl-L-methionine (SAM)-dependent reaction. This is Phosphomethylpyrimidine synthase from Baumannia cicadellinicola subsp. Homalodisca coagulata.